The primary structure comprises 259 residues: Deoxyribose-phosphate aldolase (259 aa).

The active-site Proton donor/acceptor is D102. Catalysis depends on K167, which acts as the Schiff-base intermediate with acetaldehyde. K201 serves as the catalytic Proton donor/acceptor.

Belongs to the DeoC/FbaB aldolase family. DeoC type 2 subfamily.

It localises to the cytoplasm. It carries out the reaction 2-deoxy-D-ribose 5-phosphate = D-glyceraldehyde 3-phosphate + acetaldehyde. The protein operates within carbohydrate degradation; 2-deoxy-D-ribose 1-phosphate degradation; D-glyceraldehyde 3-phosphate and acetaldehyde from 2-deoxy-alpha-D-ribose 1-phosphate: step 2/2. In terms of biological role, catalyzes a reversible aldol reaction between acetaldehyde and D-glyceraldehyde 3-phosphate to generate 2-deoxy-D-ribose 5-phosphate. This Shigella flexneri protein is Deoxyribose-phosphate aldolase.